We begin with the raw amino-acid sequence, 954 residues long: Glycine dehydrogenase (decarboxylating) (954 aa).

Lys701 is subject to N6-(pyridoxal phosphate)lysine.

Belongs to the GcvP family. The glycine cleavage system is composed of four proteins: P, T, L and H. The cofactor is pyridoxal 5'-phosphate.

It carries out the reaction N(6)-[(R)-lipoyl]-L-lysyl-[glycine-cleavage complex H protein] + glycine + H(+) = N(6)-[(R)-S(8)-aminomethyldihydrolipoyl]-L-lysyl-[glycine-cleavage complex H protein] + CO2. The glycine cleavage system catalyzes the degradation of glycine. The P protein binds the alpha-amino group of glycine through its pyridoxal phosphate cofactor; CO(2) is released and the remaining methylamine moiety is then transferred to the lipoamide cofactor of the H protein. In Bordetella parapertussis (strain 12822 / ATCC BAA-587 / NCTC 13253), this protein is Glycine dehydrogenase (decarboxylating).